The primary structure comprises 149 residues: D-aminoacyl-tRNA deacylase (149 aa).

Positions 137–138 (GP) match the Gly-cisPro motif, important for rejection of L-amino acids motif.

This sequence belongs to the DTD family. Homodimer.

The protein resides in the cytoplasm. The enzyme catalyses glycyl-tRNA(Ala) + H2O = tRNA(Ala) + glycine + H(+). It catalyses the reaction a D-aminoacyl-tRNA + H2O = a tRNA + a D-alpha-amino acid + H(+). Functionally, an aminoacyl-tRNA editing enzyme that deacylates mischarged D-aminoacyl-tRNAs. Also deacylates mischarged glycyl-tRNA(Ala), protecting cells against glycine mischarging by AlaRS. Acts via tRNA-based rather than protein-based catalysis; rejects L-amino acids rather than detecting D-amino acids in the active site. By recycling D-aminoacyl-tRNA to D-amino acids and free tRNA molecules, this enzyme counteracts the toxicity associated with the formation of D-aminoacyl-tRNA entities in vivo and helps enforce protein L-homochirality. This chain is D-aminoacyl-tRNA deacylase, found in Clostridioides difficile (strain 630) (Peptoclostridium difficile).